Reading from the N-terminus, the 61-residue chain is Small ribosomal subunit protein uS14B (61 aa).

Zn(2+)-binding residues include cysteine 24, cysteine 27, cysteine 40, and cysteine 43.

The protein belongs to the universal ribosomal protein uS14 family. Zinc-binding uS14 subfamily. Part of the 30S ribosomal subunit. Contacts proteins S3 and S10. Zn(2+) is required as a cofactor.

Its function is as follows. Binds 16S rRNA, required for the assembly of 30S particles and may also be responsible for determining the conformation of the 16S rRNA at the A site. This chain is Small ribosomal subunit protein uS14B, found in Mycobacterium ulcerans (strain Agy99).